Consider the following 209-residue polypeptide: Probable peptide export ATP-binding protein YydI (209 aa).

An ABC transporter domain is found at 1–207 (MNIANYTLKV…SVDKLIEVYI (207 aa)). 33-40 (GKNGVGKS) contributes to the ATP binding site.

The protein belongs to the ABC transporter superfamily. The complex is composed of two ATP-binding proteins (YydI), two transmembrane proteins (YydJ).

Suggested to be part of an ABC transporter complex YydIJ involved in export of the modified peptide YydF. Responsible for energy coupling to the transport system. This is Probable peptide export ATP-binding protein YydI (yydI) from Bacillus subtilis (strain 168).